The chain runs to 335 residues: MVSVGTQSHSGRDQAEQNPSVENVRYDWQLDEALAIYNLPLLELIGRANSVHRRYHDAGHLQKSSLLSIKTGGCPEDCGYCSQSAHHDVELTREKLMNPTAVIGLAAKAKKAGAERFCMGAAWRKVRDGKEFDAVLEMIRGVRALDMEACVTLGMVNEDQARRLAEAGLTAYNHNLDTGPAYYPQIVSTHSYQDRLETLAKIRDAGIALCTGGIIGLGESPRDRVEMLVVLAGMNPHPESVPVNMLVPIEGTPLADADPVDPLEIVRMIATARLMMPQSMVRLSAGRSTLSRETQILCLVAGANSIFYGNVLLTTPNADMAADDALLEALGVTAE.

The disordered stretch occupies residues 1-20; sequence MVSVGTQSHSGRDQAEQNPS. Positions 59–284 constitute a Radical SAM core domain; that stretch reads GHLQKSSLLS…MMPQSMVRLS (226 aa). [4Fe-4S] cluster contacts are provided by Cys74, Cys78, and Cys81. [2Fe-2S] cluster is bound by residues Cys118, Cys150, Cys210, and Arg282.

Belongs to the radical SAM superfamily. Biotin synthase family. In terms of assembly, homodimer. Requires [4Fe-4S] cluster as cofactor. [2Fe-2S] cluster is required as a cofactor.

The enzyme catalyses (4R,5S)-dethiobiotin + (sulfur carrier)-SH + 2 reduced [2Fe-2S]-[ferredoxin] + 2 S-adenosyl-L-methionine = (sulfur carrier)-H + biotin + 2 5'-deoxyadenosine + 2 L-methionine + 2 oxidized [2Fe-2S]-[ferredoxin]. Its pathway is cofactor biosynthesis; biotin biosynthesis; biotin from 7,8-diaminononanoate: step 2/2. Its function is as follows. Catalyzes the conversion of dethiobiotin (DTB) to biotin by the insertion of a sulfur atom into dethiobiotin via a radical-based mechanism. The protein is Biotin synthase of Zymomonas mobilis subsp. mobilis (strain ATCC 31821 / ZM4 / CP4).